We begin with the raw amino-acid sequence, 179 residues long: Large ribosomal subunit protein bL19 (179 aa).

Belongs to the bacterial ribosomal protein bL19 family.

This protein is located at the 30S-50S ribosomal subunit interface and may play a role in the structure and function of the aminoacyl-tRNA binding site. The protein is Large ribosomal subunit protein bL19 of Rhizobium johnstonii (strain DSM 114642 / LMG 32736 / 3841) (Rhizobium leguminosarum bv. viciae).